Consider the following 326-residue polypeptide: ELMO domain-containing protein 1 (326 aa).

The ELMO domain maps to 133-306; the sequence is QHEEMLLKLW…KFRKRIIKQL (174 aa).

Functionally, acts as a GTPase-activating protein (GAP) toward guanine nucleotide exchange factors like ARL2, ARL3, ARF1 and ARF6, but not for GTPases outside the Arf family. This Bos taurus (Bovine) protein is ELMO domain-containing protein 1 (ELMOD1).